A 109-amino-acid polypeptide reads, in one-letter code: Parvalbumin beta (109 aa).

Position 1 is an N-acetylserine (Ser1). 2 consecutive EF-hand domains span residues 38–73 (KTPD…FASS) and 77–109 (LTDK…VKEA). The Ca(2+) site is built by Asp51, Asp53, Ser55, Phe57, Glu59, Glu62, Asp90, Asp92, Asp94, Lys96, and Glu101.

It belongs to the parvalbumin family.

In muscle, parvalbumin is thought to be involved in relaxation after contraction. It binds two calcium ions. In Opsanus tau (Oyster toadfish), this protein is Parvalbumin beta.